We begin with the raw amino-acid sequence, 749 residues long: Protein kinase domain-containing protein ppk32 (749 aa).

Residues 21–317 enclose the Protein kinase domain; it reads IQKENSVQVG…MFELERSPYF (297 aa). 2 disordered regions span residues 598 to 677 and 706 to 749; these read KKLQ…VTAK and PLIP…KSLL. A compositionally biased stretch (polar residues) spans 602 to 651; sequence SKPSSVVPNRITTDPFSSQTKEATSKPSSISPNKATTNIFTSQASLSSQG. Residue Ser632 is modified to Phosphoserine. 2 stretches are compositionally biased toward low complexity: residues 657 to 670 and 721 to 735; these read SSAS…QRAS and NRRV…NTVT.

The protein localises to the cytoplasm. This is Protein kinase domain-containing protein ppk32 (ppk32) from Schizosaccharomyces pombe (strain 972 / ATCC 24843) (Fission yeast).